The sequence spans 60 residues: uncharacterized protein (60 aa).

A helical membrane pass occupies residues 33-55 (FRLLRGIFLITLVIWTVVWLKLL).

This sequence belongs to the HHV-5 UL2 protein family.

It localises to the host membrane. This is an uncharacterized protein from Human cytomegalovirus (strain AD169) (HHV-5).